Reading from the N-terminus, the 898-residue chain is Chaperone protein ClpB 1 (898 aa).

A Clp R domain is found at 6 to 148; it reads PTKFTEQAWD…ELAIKAIRGS (143 aa). 2 repeat regions span residues 9 to 74 and 85 to 148; these read FTEQ…TNRQ and LGRS…IRGS. The segment at 161–344 is NBD1; that stretch reads EALDKYGRDL…RRFQQVYVKQ (184 aa). Residue 208–215 participates in ATP binding; it reads GEPGVGKT. The interval 345–560 is linker; that stretch reads PSVDDTISIL…IAEIVAGWTG (216 aa). A coiled-coil region spans residues 395–536; it reads IDLVDEAAAR…KESKLLEIQG (142 aa). Residues 570–781 form an NBD2 region; the sequence is ERQKLLQLEG…RIDDLIIFHT (212 aa). Position 620–627 (620–627) interacts with ATP; the sequence is GPTGVGKT. The interval 782-898 is C-terminal; sequence LKRDELRRIV…TAVEVEVLSS (117 aa).

Belongs to the ClpA/ClpB family. Homohexamer. The oligomerization is ATP-dependent.

It localises to the cytoplasm. Functionally, part of a stress-induced multi-chaperone system, it is involved in the recovery of the cell from heat-induced damage, in cooperation with DnaK, DnaJ and GrpE. Acts before DnaK, in the processing of protein aggregates. Protein binding stimulates the ATPase activity; ATP hydrolysis unfolds the denatured protein aggregates, which probably helps expose new hydrophobic binding sites on the surface of ClpB-bound aggregates, contributing to the solubilization and refolding of denatured protein aggregates by DnaK. The polypeptide is Chaperone protein ClpB 1 (clpB1) (Synechocystis sp. (strain ATCC 27184 / PCC 6803 / Kazusa)).